Consider the following 131-residue polypeptide: MGVRVMRSRICVIGLLVLMLTQSEAYSFREKSWRTSPYYRQYGGYFRRRDGGDQAPSFTSTGNGEDVSNGLDDDAGIYLSDQAGDDGISPADKRSAMLQQLAQQLKNRPREKGGFTFRFGKRESRRSFGSD.

Residues 1 to 25 form the signal peptide; that stretch reads MGVRVMRSRICVIGLLVLMLTQSEA. Residues 26 to 94 constitute a propeptide that is removed on maturation; the sequence is YSFREKSWRT…DDGISPADKR (69 aa). Residues 48-131 form a disordered region; it reads RRDGGDQAPS…RESRRSFGSD (84 aa). Over residues 97 to 106 the composition is skewed to polar residues; sequence MLQQLAQQLK. A Phenylalanine amide modification is found at F119. Residues 120–131 show a composition bias toward basic and acidic residues; it reads GKRESRRSFGSD. Positions 123-131 are excised as a propeptide; it reads ESRRSFGSD.

This sequence belongs to the RFamide neuropeptide family.

Its subcellular location is the secreted. Functionally, ligand for the G-protein coupled receptor QRFPR. The protein is QRFP-like peptide of Branchiostoma floridae (Florida lancelet).